The following is a 132-amino-acid chain: Small ribosomal subunit protein uS8 (132 aa).

Belongs to the universal ribosomal protein uS8 family. In terms of assembly, part of the 30S ribosomal subunit. Contacts proteins S5 and S12.

In terms of biological role, one of the primary rRNA binding proteins, it binds directly to 16S rRNA central domain where it helps coordinate assembly of the platform of the 30S subunit. The sequence is that of Small ribosomal subunit protein uS8 from Streptococcus pyogenes serotype M49 (strain NZ131).